A 239-amino-acid polypeptide reads, in one-letter code: Small ribosomal subunit protein uS2 (239 aa).

It belongs to the universal ribosomal protein uS2 family.

The polypeptide is Small ribosomal subunit protein uS2 (Francisella tularensis subsp. tularensis (strain FSC 198)).